Consider the following 318-residue polypeptide: Phosphatidylglycerol--prolipoprotein diacylglyceryl transferase (318 aa).

3 helical membrane passes run 24–44, 60–80, and 115–135; these read GPST…YLLP, LLLL…VFEI, and LFSG…LFIT. Arginine 164 serves as a coordination point for a 1,2-diacyl-sn-glycero-3-phospho-(1'-sn-glycerol). 2 helical membrane passes run 198-218 and 285-305; these read VPVW…FFYF and GFSQ…FFIL.

This sequence belongs to the Lgt family.

It localises to the cell inner membrane. The catalysed reaction is L-cysteinyl-[prolipoprotein] + a 1,2-diacyl-sn-glycero-3-phospho-(1'-sn-glycerol) = an S-1,2-diacyl-sn-glyceryl-L-cysteinyl-[prolipoprotein] + sn-glycerol 1-phosphate + H(+). Its pathway is protein modification; lipoprotein biosynthesis (diacylglyceryl transfer). In terms of biological role, catalyzes the transfer of the diacylglyceryl group from phosphatidylglycerol to the sulfhydryl group of the N-terminal cysteine of a prolipoprotein, the first step in the formation of mature lipoproteins. This Leptospira interrogans serogroup Icterohaemorrhagiae serovar copenhageni (strain Fiocruz L1-130) protein is Phosphatidylglycerol--prolipoprotein diacylglyceryl transferase.